Reading from the N-terminus, the 373-residue chain is MADKIRVVVLYGGRSGEHEVSLKSAASVFRHLDRTRFEVIPVSIDKTGRWQWNDLRSLDQAHAAALPILPDAPEMRLARGPDGRGVLVPITQGAAAPIAIDVVFPVIHGPLCEDGTVQGLLELADVAYVGSGVLASAVSMDKDVAKRLAEFAGIPVAPYRVLTRKAFVQDRVSSLAKAVEGLSLPVFVKPCNMGSSVGIHKVKTQDALEAALDDAFRYDVKVLVQQGIDAREIEVAVLEDETLFASLASELNPNAHHEFYSYEAKYLDPDGARVDLPARLDAAQMERVRSLATRVFAALECSGFARVDFFLDRKTGEFCFNEINTLPGFTSISMYPKMMEASGVPYGELLSRLVDLALDRHRQRQSLERGYAS.

Residues 146 to 355 (KRLAEFAGIP…YGELLSRLVD (210 aa)) form the ATP-grasp domain. 179 to 234 (VEGLSLPVFVKPCNMGSSVGIHKVKTQDALEAALDDAFRYDVKVLVQQGIDAREIE) contacts ATP. Mg(2+)-binding residues include Asp-308, Glu-322, and Asn-324.

Belongs to the D-alanine--D-alanine ligase family. Mg(2+) serves as cofactor. It depends on Mn(2+) as a cofactor.

Its subcellular location is the cytoplasm. The enzyme catalyses 2 D-alanine + ATP = D-alanyl-D-alanine + ADP + phosphate + H(+). It participates in cell wall biogenesis; peptidoglycan biosynthesis. Cell wall formation. The polypeptide is D-alanine--D-alanine ligase A (Bradyrhizobium diazoefficiens (strain JCM 10833 / BCRC 13528 / IAM 13628 / NBRC 14792 / USDA 110)).